The chain runs to 678 residues: DNA ligase (678 aa).

NAD(+) contacts are provided by residues D35–D39, S84–L85, and E115. K117 acts as the N6-AMP-lysine intermediate in catalysis. NAD(+) contacts are provided by R138, E172, K288, and K312. Zn(2+) is bound by residues C406, C409, C425, and C430. The BRCT domain occupies V589 to F678.

This sequence belongs to the NAD-dependent DNA ligase family. LigA subfamily. Requires Mg(2+) as cofactor. The cofactor is Mn(2+).

It catalyses the reaction NAD(+) + (deoxyribonucleotide)n-3'-hydroxyl + 5'-phospho-(deoxyribonucleotide)m = (deoxyribonucleotide)n+m + AMP + beta-nicotinamide D-nucleotide.. DNA ligase that catalyzes the formation of phosphodiester linkages between 5'-phosphoryl and 3'-hydroxyl groups in double-stranded DNA using NAD as a coenzyme and as the energy source for the reaction. It is essential for DNA replication and repair of damaged DNA. The protein is DNA ligase of Pseudothermotoga lettingae (strain ATCC BAA-301 / DSM 14385 / NBRC 107922 / TMO) (Thermotoga lettingae).